The chain runs to 141 residues: Large ribosomal subunit protein bL17 (141 aa).

It belongs to the bacterial ribosomal protein bL17 family. In terms of assembly, part of the 50S ribosomal subunit. Contacts protein L32.

In Gluconacetobacter diazotrophicus (strain ATCC 49037 / DSM 5601 / CCUG 37298 / CIP 103539 / LMG 7603 / PAl5), this protein is Large ribosomal subunit protein bL17.